The primary structure comprises 237 residues: MSIHISAKKGDIADKILLPGDPLRAKFIAENFLEDAVCFNEVRNMFGYTGTYKGHRVSVMGTGMGMPSISIYARELIVDYGVKTLIRVGTAGAIDPEVHVRELVLAQAAATNSNIIRNDFPEFDFPQIADFGLLDKAYHIAREMGVTTHVGNVLSSDVFYTNMPERNMVLGKLGVKAIEMEAAALYYLAAQHHVKALGIMTISDNLNDPTEDTTAEERQTTFTDMMKIGLETLIAND.

Histidine 4 serves as a coordination point for a purine D-ribonucleoside. Phosphate-binding positions include glycine 20, arginine 24, arginine 43, and 87 to 90 (RVGT). A purine D-ribonucleoside contacts are provided by residues 179–181 (EME) and 203–204 (SD). Residue aspartate 204 is the Proton donor of the active site.

It belongs to the PNP/UDP phosphorylase family. Homohexamer; trimer of homodimers.

The enzyme catalyses a purine D-ribonucleoside + phosphate = a purine nucleobase + alpha-D-ribose 1-phosphate. It catalyses the reaction a purine 2'-deoxy-D-ribonucleoside + phosphate = a purine nucleobase + 2-deoxy-alpha-D-ribose 1-phosphate. Its function is as follows. Catalyzes the reversible phosphorolytic breakdown of the N-glycosidic bond in the beta-(deoxy)ribonucleoside molecules, with the formation of the corresponding free purine bases and pentose-1-phosphate. The sequence is that of Purine nucleoside phosphorylase DeoD-type from Streptococcus pyogenes serotype M4 (strain MGAS10750).